The chain runs to 212 residues: GTP cyclohydrolase 1 (212 aa).

The Zn(2+) site is built by Cys103, His106, and Cys174.

The protein belongs to the GTP cyclohydrolase I family. Toroid-shaped homodecamer, composed of two pentamers of five dimers.

The catalysed reaction is GTP + H2O = 7,8-dihydroneopterin 3'-triphosphate + formate + H(+). The protein operates within cofactor biosynthesis; 7,8-dihydroneopterin triphosphate biosynthesis; 7,8-dihydroneopterin triphosphate from GTP: step 1/1. The polypeptide is GTP cyclohydrolase 1 (Caulobacter vibrioides (strain ATCC 19089 / CIP 103742 / CB 15) (Caulobacter crescentus)).